The following is a 199-amino-acid chain: Inner membrane protein E199L (199 aa).

N-linked (GlcNAc...) asparagine; by host glycosylation occurs at N131. The helical transmembrane segment at 150 to 170 (INVMNHPFLTLILIILILIII) threads the bilayer.

Belongs to the asfivirus E199L family. Interacts with host PYCR2; this interaction results in autophagy activation. Contains intramolecular disulfide bonds.

It localises to the virion membrane. The protein resides in the host membrane. Functionally, essential for viral fusion with host endosomal membrane and core release. Not required for virus morphogenesis and egress. Induces complete autophagy through the interaction with and down-regulation of host PYCR2. The protein is Inner membrane protein E199L of African swine fever virus (isolate Tick/South Africa/Pretoriuskop Pr4/1996) (ASFV).